Here is a 197-residue protein sequence, read N- to C-terminus: MAVNRTPVLKRCRSLEMDPVYLGIDKKSRRKAKNAGRKVSEYGMQLREKQKAKFIYGVLEKPFRNYYKKAERQKGMTGENLMIMLELRLDNVLFRLGFARTRKEARQIVDHKHVLVNGKCVNIPSYLVKAGDVIEIREKSKSSARYKEILESTNGRLVPEWLEADADALKGSVKSIPTREVIDVPVNEMLIVELYSK.

The S4 RNA-binding domain maps to 87 to 147 (LRLDNVLFRL…EKSKSSARYK (61 aa)).

It belongs to the universal ribosomal protein uS4 family. As to quaternary structure, part of the 30S ribosomal subunit. Contacts protein S5. The interaction surface between S4 and S5 is involved in control of translational fidelity.

Functionally, one of the primary rRNA binding proteins, it binds directly to 16S rRNA where it nucleates assembly of the body of the 30S subunit. With S5 and S12 plays an important role in translational accuracy. This is Small ribosomal subunit protein uS4 from Lachnospira eligens (strain ATCC 27750 / DSM 3376 / VPI C15-48 / C15-B4) (Eubacterium eligens).